Reading from the N-terminus, the 269-residue chain is MKHIPRKRFGQHFLADQSVLDRIVQLIDPQPGEALVEIGPGLGAMTDPVVERCKRLTVVELDRDLAARLRKRPELTVIESDVLKVDFTALAQAAGRPVRVIGNLPYNISSPILFHLLEQVASVQDQHFMLQKEVVDRMASAPGSKDYGRLSVMLQWRYQIESLLDVPPESFDPPPRVDSAIVRMLPLAQPPAVDPKLLGELVTVAFSQRRKMLRNTLGRWLEAREHGGAFDLTRRAEEVPVAEFVALTMAIQQTPSNSPLTAGATPDAA.

H12, L14, G39, E60, D81, and N103 together coordinate S-adenosyl-L-methionine.

This sequence belongs to the class I-like SAM-binding methyltransferase superfamily. rRNA adenine N(6)-methyltransferase family. RsmA subfamily.

It is found in the cytoplasm. The catalysed reaction is adenosine(1518)/adenosine(1519) in 16S rRNA + 4 S-adenosyl-L-methionine = N(6)-dimethyladenosine(1518)/N(6)-dimethyladenosine(1519) in 16S rRNA + 4 S-adenosyl-L-homocysteine + 4 H(+). Specifically dimethylates two adjacent adenosines (A1518 and A1519) in the loop of a conserved hairpin near the 3'-end of 16S rRNA in the 30S particle. May play a critical role in biogenesis of 30S subunits. The sequence is that of Ribosomal RNA small subunit methyltransferase A from Leptothrix cholodnii (strain ATCC 51168 / LMG 8142 / SP-6) (Leptothrix discophora (strain SP-6)).